Consider the following 347-residue polypeptide: Fc receptor-like A (347 aa).

The N-terminal stretch at 1–27 (MKLSCMLIEWALYVCPAVLLATQMSLA) is a signal peptide. Ig-like C2-type domains are found at residues 77–166 (PFHL…ETAS) and 179–257 (PVLK…RQIS). Disulfide bonds link cysteine 106–cysteine 150 and cysteine 199–cysteine 247. The disordered stretch occupies residues 272–296 (KPATPETPPPAKAPGPLPLLPTPSD). Positions 276-292 (PETPPPAKAPGPLPLLP) are enriched in pro residues.

As to quaternary structure, monomer or homodimer; disulfide-linked.

The protein resides in the cytoplasm. May be implicated in B-cell differentiation and lymphomagenesis. The polypeptide is Fc receptor-like A (Fcrla) (Rattus norvegicus (Rat)).